An 87-amino-acid chain; its full sequence is Small ribosomal subunit protein bS18 (87 aa).

It belongs to the bacterial ribosomal protein bS18 family. Part of the 30S ribosomal subunit. Forms a tight heterodimer with protein bS6.

Its function is as follows. Binds as a heterodimer with protein bS6 to the central domain of the 16S rRNA, where it helps stabilize the platform of the 30S subunit. This is Small ribosomal subunit protein bS18 from Campylobacter hominis (strain ATCC BAA-381 / DSM 21671 / CCUG 45161 / LMG 19568 / NCTC 13146 / CH001A).